Consider the following 353-residue polypeptide: Deoxyribonuclease-2-alpha (353 aa).

A signal peptide spans 1-19 (MATLRSLLLAALLWVPAEA). C22 and C161 are oxidised to a cystine. N71, N88, N214, and N268 each carry an N-linked (GlcNAc...) asparagine glycan. 2 disulfide bridges follow: C269/C349 and C310/C329. The active site involves H297.

Belongs to the DNase II family. As to expression, highly expressed in fetal liver macrophages.

The protein resides in the lysosome. It catalyses the reaction Endonucleolytic cleavage to nucleoside 3'-phosphates and 3'-phosphooligonucleotide end-products.. Functionally, hydrolyzes DNA under acidic conditions with a preference for double-stranded DNA. Plays a major role in the clearance of nucleic acids generated through apoptosis, hence preventing autoinflammation. Necessary for proper fetal development and for definitive erythropoiesis in fetal liver and bone marrow, where it degrades nuclear DNA expelled from erythroid precursor cells. This is Deoxyribonuclease-2-alpha (Dnase2) from Mus musculus (Mouse).